A 293-amino-acid chain; its full sequence is 4-diphosphocytidyl-2-C-methyl-D-erythritol kinase (293 aa).

Lys16 is an active-site residue. 99-109 (PMGAGLGGGSS) is a binding site for ATP. Asp141 is an active-site residue.

The protein belongs to the GHMP kinase family. IspE subfamily.

It catalyses the reaction 4-CDP-2-C-methyl-D-erythritol + ATP = 4-CDP-2-C-methyl-D-erythritol 2-phosphate + ADP + H(+). The protein operates within isoprenoid biosynthesis; isopentenyl diphosphate biosynthesis via DXP pathway; isopentenyl diphosphate from 1-deoxy-D-xylulose 5-phosphate: step 3/6. Its function is as follows. Catalyzes the phosphorylation of the position 2 hydroxy group of 4-diphosphocytidyl-2C-methyl-D-erythritol. The sequence is that of 4-diphosphocytidyl-2-C-methyl-D-erythritol kinase from Paraburkholderia phymatum (strain DSM 17167 / CIP 108236 / LMG 21445 / STM815) (Burkholderia phymatum).